Reading from the N-terminus, the 635-residue chain is 1-deoxy-D-xylulose-5-phosphate synthase (635 aa).

Thiamine diphosphate contacts are provided by residues His73 and 114 to 116; that span reads SHA. Position 146 (Asp146) interacts with Mg(2+). Thiamine diphosphate contacts are provided by residues 147-148, Asn176, Tyr287, and Glu368; that span reads GA. Asn176 lines the Mg(2+) pocket.

This sequence belongs to the transketolase family. DXPS subfamily. As to quaternary structure, homodimer. The cofactor is Mg(2+). It depends on thiamine diphosphate as a cofactor.

The enzyme catalyses D-glyceraldehyde 3-phosphate + pyruvate + H(+) = 1-deoxy-D-xylulose 5-phosphate + CO2. The protein operates within metabolic intermediate biosynthesis; 1-deoxy-D-xylulose 5-phosphate biosynthesis; 1-deoxy-D-xylulose 5-phosphate from D-glyceraldehyde 3-phosphate and pyruvate: step 1/1. Its function is as follows. Catalyzes the acyloin condensation reaction between C atoms 2 and 3 of pyruvate and glyceraldehyde 3-phosphate to yield 1-deoxy-D-xylulose-5-phosphate (DXP). The chain is 1-deoxy-D-xylulose-5-phosphate synthase from Corynebacterium diphtheriae (strain ATCC 700971 / NCTC 13129 / Biotype gravis).